Here is a 96-residue protein sequence, read N- to C-terminus: Small ribosomal subunit protein bS16m (96 aa).

It belongs to the bacterial ribosomal protein bS16 family. As to quaternary structure, component of the mitochondrial small ribosomal subunit (mt-SSU). Mature yeast 74S mitochondrial ribosomes consist of a small (37S) and a large (54S) subunit. The 37S small subunit contains a 15S ribosomal RNA (15S mt-rRNA) and at least 32 different proteins. The 54S large subunit contains a 21S rRNA (21S mt-rRNA) and at least 45 different proteins.

The protein localises to the mitochondrion. Component of the mitochondrial ribosome (mitoribosome), a dedicated translation machinery responsible for the synthesis of mitochondrial genome-encoded proteins, including at least some of the essential transmembrane subunits of the mitochondrial respiratory chain. The mitoribosomes are attached to the mitochondrial inner membrane and translation products are cotranslationally integrated into the membrane. This chain is Small ribosomal subunit protein bS16m (mrps16), found in Schizosaccharomyces pombe (strain 972 / ATCC 24843) (Fission yeast).